The primary structure comprises 172 residues: Protein GrpE (172 aa).

The interval 1–24 (MNQDHPEFDSEDLAQNPPETDPLK) is disordered.

This sequence belongs to the GrpE family. In terms of assembly, homodimer.

It localises to the cytoplasm. Functionally, participates actively in the response to hyperosmotic and heat shock by preventing the aggregation of stress-denatured proteins, in association with DnaK and GrpE. It is the nucleotide exchange factor for DnaK and may function as a thermosensor. Unfolded proteins bind initially to DnaJ; upon interaction with the DnaJ-bound protein, DnaK hydrolyzes its bound ATP, resulting in the formation of a stable complex. GrpE releases ADP from DnaK; ATP binding to DnaK triggers the release of the substrate protein, thus completing the reaction cycle. Several rounds of ATP-dependent interactions between DnaJ, DnaK and GrpE are required for fully efficient folding. This chain is Protein GrpE, found in Xanthomonas oryzae pv. oryzae (strain PXO99A).